Here is a 707-residue protein sequence, read N- to C-terminus: Methionine--tRNA ligase (707 aa).

The 'HIGH' region motif lies at 13–23 (PYANGNFHIGH). Zn(2+) is bound by residues Cys-147, Cys-150, Cys-160, and Cys-163. A 'KMSKS' region motif is present at residues 344–348 (KMSKS). Lys-347 contributes to the ATP binding site. Residues 601–707 (DFAKVDLRIA…PGATPGMRIH (107 aa)) form the tRNA-binding domain.

It belongs to the class-I aminoacyl-tRNA synthetase family. MetG type 1 subfamily. In terms of assembly, homodimer. Requires Zn(2+) as cofactor.

The protein resides in the cytoplasm. The enzyme catalyses tRNA(Met) + L-methionine + ATP = L-methionyl-tRNA(Met) + AMP + diphosphate. In terms of biological role, is required not only for elongation of protein synthesis but also for the initiation of all mRNA translation through initiator tRNA(fMet) aminoacylation. The sequence is that of Methionine--tRNA ligase from Polaromonas naphthalenivorans (strain CJ2).